A 423-amino-acid chain; its full sequence is MNILQNLKESDPVISNFIKSEKNRQETHLELIASENFASIAVMEAQGSVLTNKYAEGLPQKRYYGGCEFVDQIEELAIQRAKKLFNANWANVQPHSGAQANAAVFLSLLKPGDTIMGMDLSHGGHLTHGSPVNMSGKWFNAVHYGVNKETSELNFDEIREIALETKPKLIICGYSAYPRTIDFESFRNIADEVGAFLMADIAHIAGLVASKLHPNPIPYCDVVTTTTHKTLRGPRGGLILCKDAEFGKKFDKSVFPGTQGGPLEHIIAAKAVAFGEALQPDFVNYSQQVIKNAKVLASTLINRGIDIVSGGTDNHIVLLDLRSINMTGKIADLLVSEVNITANKNTVPFDPESPFVTSGLRLGTAALTTRGFNENAFAEVGEIIADRLLNPDDSLIESQCKERVLTLCNRFPLYESKLEASIK.

(6S)-5,6,7,8-tetrahydrofolate-binding positions include leucine 120 and 124 to 126 (GHL). Lysine 229 bears the N6-(pyridoxal phosphate)lysine mark. 353-355 (SPF) is a (6S)-5,6,7,8-tetrahydrofolate binding site.

The protein belongs to the SHMT family. As to quaternary structure, homodimer. It depends on pyridoxal 5'-phosphate as a cofactor.

It localises to the cytoplasm. It carries out the reaction (6R)-5,10-methylene-5,6,7,8-tetrahydrofolate + glycine + H2O = (6S)-5,6,7,8-tetrahydrofolate + L-serine. It participates in one-carbon metabolism; tetrahydrofolate interconversion. Its pathway is amino-acid biosynthesis; glycine biosynthesis; glycine from L-serine: step 1/1. Catalyzes the reversible interconversion of serine and glycine with tetrahydrofolate (THF) serving as the one-carbon carrier. This reaction serves as the major source of one-carbon groups required for the biosynthesis of purines, thymidylate, methionine, and other important biomolecules. Also exhibits THF-independent aldolase activity toward beta-hydroxyamino acids, producing glycine and aldehydes, via a retro-aldol mechanism. This Prochlorococcus marinus (strain MIT 9301) protein is Serine hydroxymethyltransferase.